A 127-amino-acid polypeptide reads, in one-letter code: Aspartate 1-decarboxylase (127 aa).

The active-site Schiff-base intermediate with substrate; via pyruvic acid is Ser-25. Ser-25 carries the pyruvic acid (Ser) modification. Residue Thr-57 coordinates substrate. The active-site Proton donor is the Tyr-58. Substrate is bound at residue 73–75 (GAA).

Belongs to the PanD family. As to quaternary structure, heterooctamer of four alpha and four beta subunits. Pyruvate is required as a cofactor. Is synthesized initially as an inactive proenzyme, which is activated by self-cleavage at a specific serine bond to produce a beta-subunit with a hydroxyl group at its C-terminus and an alpha-subunit with a pyruvoyl group at its N-terminus.

The protein localises to the cytoplasm. It carries out the reaction L-aspartate + H(+) = beta-alanine + CO2. It functions in the pathway cofactor biosynthesis; (R)-pantothenate biosynthesis; beta-alanine from L-aspartate: step 1/1. Functionally, catalyzes the pyruvoyl-dependent decarboxylation of aspartate to produce beta-alanine. In Staphylococcus aureus (strain MSSA476), this protein is Aspartate 1-decarboxylase.